A 78-amino-acid chain; its full sequence is Small ribosomal subunit protein uS17 (78 aa).

This sequence belongs to the universal ribosomal protein uS17 family. Part of the 30S ribosomal subunit.

In terms of biological role, one of the primary rRNA binding proteins, it binds specifically to the 5'-end of 16S ribosomal RNA. The protein is Small ribosomal subunit protein uS17 of Rhizobium meliloti (strain 1021) (Ensifer meliloti).